We begin with the raw amino-acid sequence, 351 residues long: Photosystem II D2 protein (351 aa).

Residues 39–59 (CAYLALGAWFTGTTFVSSWYT) form a helical membrane-spanning segment. Chlorophyll a is bound at residue histidine 116. A helical membrane pass occupies residues 123-139 (GFCLRQFEIARLVGLRP). Residues glutamine 128 and asparagine 141 each coordinate pheophytin a. The chain crosses the membrane as a helical span at residues 151-164 (VFVSVFLLYPLGQA). Histidine 196 provides a ligand contact to chlorophyll a. A helical membrane pass occupies residues 206–226 (GALLCAIHGATVENTLFEDGE). Residues histidine 213 and phenylalanine 260 each contribute to the a plastoquinone site. Residue histidine 213 participates in Fe cation binding. Position 267 (histidine 267) interacts with Fe cation. Residues 277–293 (GLWVSSIGIVGLALNLR) traverse the membrane as a helical segment.

It belongs to the reaction center PufL/M/PsbA/D family. In terms of assembly, PSII is composed of 1 copy each of membrane proteins PsbA, PsbB, PsbC, PsbD, PsbE, PsbF, PsbH, PsbI, PsbJ, PsbK, PsbL, PsbM, PsbT, PsbY, PsbZ, Psb30/Ycf12, at least 3 peripheral proteins of the oxygen-evolving complex and a large number of cofactors. It forms dimeric complexes. The D1/D2 heterodimer binds P680, chlorophylls that are the primary electron donor of PSII, and subsequent electron acceptors. It shares a non-heme iron and each subunit binds pheophytin, quinone, additional chlorophylls, carotenoids and lipids. There is also a Cl(-1) ion associated with D1 and D2, which is required for oxygen evolution. The PSII complex binds additional chlorophylls, carotenoids and specific lipids. is required as a cofactor.

It localises to the plastid. The protein resides in the chloroplast thylakoid membrane. The catalysed reaction is 2 a plastoquinone + 4 hnu + 2 H2O = 2 a plastoquinol + O2. Functionally, photosystem II (PSII) is a light-driven water:plastoquinone oxidoreductase that uses light energy to abstract electrons from H(2)O, generating O(2) and a proton gradient subsequently used for ATP formation. It consists of a core antenna complex that captures photons, and an electron transfer chain that converts photonic excitation into a charge separation. The D1/D2 (PsbA/PsbD) reaction center heterodimer binds P680, the primary electron donor of PSII as well as several subsequent electron acceptors. D2 is needed for assembly of a stable PSII complex. The chain is Photosystem II D2 protein from Cyanidium caldarium (Red alga).